The chain runs to 832 residues: DNA polymerase I, thermostable (832 aa).

The region spanning 175 to 260 (RPDQWADYRA…DLPLEVDFAK (86 aa)) is the 5'-3' exonuclease domain. The polymerase stretch occupies residues 410 to 832 (ERLFANLWGR…IGEDWLSAKE (423 aa)).

The protein belongs to the DNA polymerase type-A family.

The enzyme catalyses DNA(n) + a 2'-deoxyribonucleoside 5'-triphosphate = DNA(n+1) + diphosphate. In terms of biological role, in addition to polymerase activity, this DNA polymerase exhibits 5'-3' exonuclease activity. Unlikely to have 3'-5' exonuclease activity due to absence of a 3'-5' exonuclease domain. The chain is DNA polymerase I, thermostable (polA) from Thermus aquaticus.